The sequence spans 106 residues: Transcription initiation factor IIA subunit 2 (106 aa).

The protein belongs to the TFIIA subunit 2 family. As to quaternary structure, TFIIA is a heterodimer of the large unprocessed subunit 1 and a small subunit gamma. It was originally believed to be a heterotrimer of an alpha (p30), a beta (p20) and a gamma (p14) subunit. Forms a complex with Moonshiner/CG12721 and Trf2. Ubiquitous.

It localises to the nucleus. TFIIA is a component of the transcription machinery of RNA polymerase II and plays an important role in transcriptional activation. TFIIA in a complex with TBP mediates transcriptional activity. Part of a rhi-dependent transcription machinery that enables the generation of piRNA precursors from heterochromatin while maintaining the suppression of transposon-encoded promoters and enhancers. Forms a complex with Moonshiner/CG12721 and Trf2 which recruit transcriptional machinery to heterochromatin to initiate the bidirectional transcription of piRNA clusters, by interacting with the RDC (rhi, del and cuff) complex that binds to repressive H3K9me3 marks in the chromatin. This mechanism allows transcription to occur in piRNA clusters despite the lack of proper promoter elements and in the presence of the repressive H3K9me3 mark. In Drosophila melanogaster (Fruit fly), this protein is Transcription initiation factor IIA subunit 2 (TfIIA-S).